Reading from the N-terminus, the 302-residue chain is MVTEQEVEAIGKTLVDSTQPLQARFRALFTLRGLGGPDAISWISRGFEDSSALLKHELAYCLGQMRDPRAIPVLVSVLQDRNQEPMVRHEAGEALGAIGNPKVLGLLKQYSTDPVVEVAETCQLAVRRLEWLQQHPGEATCAGPYLSVDPAPPAAEGDVGRLRETLLDEAQPLFERYRAMFALRNVGGKEAALALAEGLKCGSALFRHEVGYVLGQLQHEAAVSELAATLARTTESPMVRHECAEALGAIARPACLAALREYITDPERVVRESCEVALDMYEYENGQDFQYADGLERLRPPP.

Met1 is subject to N-acetylmethionine. 5 HEAT-like PBS-type repeats span residues Leu54–Asp80, Val87–Asp113, Glu175–Cys201, Phe206–Arg232, and Val239–Asp265. Fe cation-binding residues include His56, His89, and Glu90. The Fe cation site is built by His208, His241, and Glu242.

This sequence belongs to the deoxyhypusine hydroxylase family. It depends on Fe(2+) as a cofactor.

The enzyme catalyses [eIF5A protein]-deoxyhypusine + AH2 + O2 = [eIF5A protein]-hypusine + A + H2O. Its pathway is protein modification; eIF5A hypusination. In terms of biological role, catalyzes the hydroxylation of the N(6)-(4-aminobutyl)-L-lysine intermediate produced by deoxyhypusine synthase/DHPS on a critical lysine of the eukaryotic translation initiation factor 5A/eIF-5A. This is the second step of the post-translational modification of that lysine into an unusual amino acid residue named hypusine. Hypusination is unique to mature eIF-5A factor and is essential for its function. In Rattus norvegicus (Rat), this protein is Deoxyhypusine hydroxylase (Dohh).